Reading from the N-terminus, the 481-residue chain is UDP-N-acetylmuramoyl-L-alanyl-D-glutamate--L-lysine ligase (481 aa).

S42 is a UDP-N-acetyl-alpha-D-muramoyl-L-alanyl-D-glutamate binding site. 118–124 (GTKGKTT) lines the ATP pocket. Residues Q158, 160–161 (TT), S187, and R195 contribute to the UDP-N-acetyl-alpha-D-muramoyl-L-alanyl-D-glutamate site. The residue at position 229 (K229) is an N6-carboxylysine. The short motif at 404–407 (DDPN) is the L-lysine recognition motif element.

The protein belongs to the MurCDEF family. MurE subfamily. Carboxylation is probably crucial for Mg(2+) binding and, consequently, for the gamma-phosphate positioning of ATP.

Its subcellular location is the cytoplasm. The catalysed reaction is UDP-N-acetyl-alpha-D-muramoyl-L-alanyl-D-glutamate + L-lysine + ATP = UDP-N-acetyl-alpha-D-muramoyl-L-alanyl-gamma-D-glutamyl-L-lysine + ADP + phosphate + H(+). The protein operates within cell wall biogenesis; peptidoglycan biosynthesis. Its function is as follows. Catalyzes the addition of L-lysine to the nucleotide precursor UDP-N-acetylmuramoyl-L-alanyl-D-glutamate (UMAG) in the biosynthesis of bacterial cell-wall peptidoglycan. The polypeptide is UDP-N-acetylmuramoyl-L-alanyl-D-glutamate--L-lysine ligase (Streptococcus pyogenes serotype M18 (strain MGAS8232)).